A 196-amino-acid polypeptide reads, in one-letter code: RNA annealing protein YRA2 (196 aa).

Disordered stretches follow at residues 1–63 (MSVD…PTHQ) and 143–196 (DSTR…MNGN). The RRM domain maps to 63-137 (QRVRFLNIPL…AKITVEIFEQ (75 aa)). Residues 149-159 (RSTDHVEKEAG) show a composition bias toward basic and acidic residues.

The protein belongs to the YRA1 family. As to quaternary structure, associates with mRNPs.

Its subcellular location is the nucleus. Involved in export of poly(A) mRNAs from the nucleus. Recruited to the coding sequences as well as poly-A sites of active genes. This Eremothecium gossypii (strain ATCC 10895 / CBS 109.51 / FGSC 9923 / NRRL Y-1056) (Yeast) protein is RNA annealing protein YRA2 (YRA2).